Consider the following 293-residue polypeptide: ATP synthase gamma chain (293 aa).

Belongs to the ATPase gamma chain family. As to quaternary structure, F-type ATPases have 2 components, CF(1) - the catalytic core - and CF(0) - the membrane proton channel. CF(1) has five subunits: alpha(3), beta(3), gamma(1), delta(1), epsilon(1). CF(0) has three main subunits: a, b and c.

The protein resides in the cell inner membrane. Functionally, produces ATP from ADP in the presence of a proton gradient across the membrane. The gamma chain is believed to be important in regulating ATPase activity and the flow of protons through the CF(0) complex. The protein is ATP synthase gamma chain of Leptothrix cholodnii (strain ATCC 51168 / LMG 8142 / SP-6) (Leptothrix discophora (strain SP-6)).